Here is a 427-residue protein sequence, read N- to C-terminus: Phosphoglucosamine mutase (427 aa).

Ser94 acts as the Phosphoserine intermediate in catalysis. Mg(2+) is bound by residues Ser94, Asp228, Asp230, and Asp232. Position 94 is a phosphoserine (Ser94).

It belongs to the phosphohexose mutase family. The cofactor is Mg(2+). In terms of processing, activated by phosphorylation.

It catalyses the reaction alpha-D-glucosamine 1-phosphate = D-glucosamine 6-phosphate. In terms of biological role, catalyzes the conversion of glucosamine-6-phosphate to glucosamine-1-phosphate. The polypeptide is Phosphoglucosamine mutase (Thermotoga sp. (strain RQ2)).